The chain runs to 428 residues: Stabilizer of axonemal microtubules 4 (428 aa).

Residues 201-231 (AKEETGFTEESNKNPIVFQPPSQALPGDPVL) form a disordered region.

As to quaternary structure, microtubule inner protein component of sperm flagellar doublet microtubules. Interacts with PPP1CA.

It is found in the cell projection. Its subcellular location is the cilium. It localises to the cytoplasm. The protein localises to the cytoskeleton. The protein resides in the flagellum axoneme. This chain is Stabilizer of axonemal microtubules 4, found in Bos taurus (Bovine).